Reading from the N-terminus, the 1168-residue chain is Probable pre-mRNA-splicing factor ATP-dependent RNA helicase DEAH5 (1168 aa).

Residues 76–206 (IYPPKPKSEK…KDEYVEEDKG (131 aa)) are disordered. Composition is skewed to basic and acidic residues over residues 81–172 (PKSE…DRRS) and 180–206 (GRGDGGEGEDRRRDRRAKDEYVEEDKG). Residues 214–283 (YQVYKGRVTR…SSDKYSLSMR (70 aa)) form the S1 motif domain. A disordered region spans residues 289–326 (TGRDLIPLRKPSDEDDSSRSNPSYRTKDGQVTKTGISG). S411 is subject to Phosphoserine. One can recognise a Helicase ATP-binding domain in the interval 525–688 (IQAVHDNQVL…FFNCNIFTIP (164 aa)). Position 538-545 (538-545 (GETGSGKT)) interacts with ATP. A DEAH box motif is present at residues 635-638 (DEAH). Residues 706-886 (YLDAALITVL…MTTLTMKAMG (181 aa)) form the Helicase C-terminal domain.

This sequence belongs to the DEAD box helicase family. DEAH subfamily. PRP22 sub-subfamily.

Its subcellular location is the nucleus. The enzyme catalyses ATP + H2O = ADP + phosphate + H(+). Its function is as follows. May be involved in pre-mRNA splicing. This is Probable pre-mRNA-splicing factor ATP-dependent RNA helicase DEAH5 from Arabidopsis thaliana (Mouse-ear cress).